A 261-amino-acid chain; its full sequence is Indole-3-glycerol phosphate synthase (261 aa).

It belongs to the TrpC family.

It carries out the reaction 1-(2-carboxyphenylamino)-1-deoxy-D-ribulose 5-phosphate + H(+) = (1S,2R)-1-C-(indol-3-yl)glycerol 3-phosphate + CO2 + H2O. Its pathway is amino-acid biosynthesis; L-tryptophan biosynthesis; L-tryptophan from chorismate: step 4/5. This is Indole-3-glycerol phosphate synthase from Burkholderia vietnamiensis (strain G4 / LMG 22486) (Burkholderia cepacia (strain R1808)).